Here is a 44-residue protein sequence, read N- to C-terminus: Photosystem I reaction center subunit IX (44 aa).

The chain crosses the membrane as a helical span at residues 7–27 (YLSTVPVLTTLWFGSLAGLLI).

It belongs to the PsaJ family.

The protein localises to the plastid. It localises to the chloroplast thylakoid membrane. In terms of biological role, may help in the organization of the PsaE and PsaF subunits. The protein is Photosystem I reaction center subunit IX of Dioscorea elephantipes (Elephant's foot yam).